A 235-amino-acid chain; its full sequence is MQNADPKELAKFSELAHKWWDPESEFRPLHQINPLRLNWIEQTVGKLDGLKVLDVGCGGGILSEAMAQRGAQVLGIDLAERSLKVAQLHALESGQTRVEYREIAAEALAAEQPARYDVVTCMEMVEHVPDPASIVQACSQLVKPGGWVFLSTINRNPKSFLLAIVGAEYVLKMLPAGTHEYAKFIRPSELLRWCRDTGLDLRHTRGMEYNPLTRRYWLSADTSVNYLVACRKETA.

S-adenosyl-L-methionine-binding residues include Arg36, Gly56, Asp77, and Met122.

This sequence belongs to the methyltransferase superfamily. UbiG/COQ3 family.

The catalysed reaction is a 3-demethylubiquinol + S-adenosyl-L-methionine = a ubiquinol + S-adenosyl-L-homocysteine + H(+). The enzyme catalyses a 3-(all-trans-polyprenyl)benzene-1,2-diol + S-adenosyl-L-methionine = a 2-methoxy-6-(all-trans-polyprenyl)phenol + S-adenosyl-L-homocysteine + H(+). Its pathway is cofactor biosynthesis; ubiquinone biosynthesis. Functionally, O-methyltransferase that catalyzes the 2 O-methylation steps in the ubiquinone biosynthetic pathway. The sequence is that of Ubiquinone biosynthesis O-methyltransferase from Leptothrix cholodnii (strain ATCC 51168 / LMG 8142 / SP-6) (Leptothrix discophora (strain SP-6)).